Here is a 353-residue protein sequence, read N- to C-terminus: MREKWVRAFAGVFCAMLLIGCSKSDRPQMGNAGGAEGGDFVVGMVTDSGDIDDKSFNQQVWEGISRFAQENNAKCKYVTASTDAEYVPSLSAFADENMGLVVACGSFLVEAVIETSARFPKQKFLVIDAVVQDRDNVVSAVFGQNEGSFLVGVAAALKAKEAGKSAVGFIVGMELGMMPLFEAGFEAGVKAVDPDIQVVVEVANTFSDPQKGQALAAKLYDSGVNVIFQVAGGTGNGVIKEARDRRLNGQDVWVIGVDRDQYMDGVYDGSKSVVLTSMVKRADVAAERISKMAYDGSFPGGQSIMFGLEDKAVGIPEENPNLSSAVMEKIRSFEEKIVSKEIVVPVRSARMMN.

Residues Met1 to Gly20 form the signal peptide. Cys21 carries the N-palmitoyl cysteine lipid modification. The S-diacylglycerol cysteine moiety is linked to residue Cys21. Asp47 serves as a coordination point for guanosine. Asp47 contacts inosine. Adenosine contacts are provided by residues Asp47–Ser48 and Phe56. Residues Asn57, Asp128, Phe206, Gly232, Asp258, and Lys280 each coordinate guanosine. Positions 57 and 128 each coordinate inosine. Asp128, Phe206, Gly232, Asp258, and Lys280 together coordinate adenosine. Inosine-binding residues include Gly232, Asp258, and Lys280.

The protein belongs to the BMP lipoprotein family. In terms of assembly, monomer.

The protein resides in the cell membrane. Functionally, binds purine nucleosides and may play a role in purine nucleoside uptake. May be part of an ABC-type nucleoside uptake system. Has highest affinity for guanosine, followed by inosine and adenosine. Has very low affinity for cytidine and does not bind thymidine. The polypeptide is Membrane lipoprotein TmpC (tmpC) (Treponema pallidum (strain Nichols)).